The following is a 332-amino-acid chain: L-lactate dehydrogenase A chain (332 aa).

N-acetylalanine is present on alanine 2. The residue at position 5 (lysine 5) is an N6-acetyllysine; alternate. Residue lysine 5 is modified to N6-succinyllysine; alternate. Lysine 14 carries the post-translational modification N6-acetyllysine. Phosphothreonine is present on threonine 18. 29–57 (GAVGMACAISILMKDLADELALVDVIEDK) contacts NAD(+). Lysine 57 is modified (N6-acetyllysine; alternate). Lysine 57 participates in a covalent cross-link: Glycyl lysine isopeptide (Lys-Gly) (interchain with G-Cter in SUMO2); alternate. Residue lysine 81 is modified to N6-acetyllysine. Arginine 99 lines the NAD(+) pocket. Arginine 106 contributes to the substrate binding site. Lysine 118 is subject to N6-acetyllysine; alternate. Lysine 118 is modified (N6-succinyllysine; alternate). At lysine 126 the chain carries N6-acetyllysine. Residues asparagine 138 and arginine 169 each coordinate substrate. Histidine 193 (proton acceptor) is an active-site residue. Lysine 224 and lysine 232 each carry N6-acetyllysine. Tyrosine 239 bears the Phosphotyrosine mark. The residue at position 243 (lysine 243) is an N6-acetyllysine. Residue threonine 248 participates in substrate binding. Threonine 309 carries the post-translational modification Phosphothreonine. Position 310 is a phosphoserine (serine 310). Lysine 318 is subject to N6-acetyllysine; alternate. An N6-succinyllysine; alternate modification is found at lysine 318. Residue threonine 322 is modified to Phosphothreonine.

Belongs to the LDH/MDH superfamily. LDH family. Homotetramer. Interacts with PTEN upstream reading frame protein MP31. Post-translationally, ISGylated.

The protein resides in the cytoplasm. It catalyses the reaction (S)-lactate + NAD(+) = pyruvate + NADH + H(+). The protein operates within fermentation; pyruvate fermentation to lactate; (S)-lactate from pyruvate: step 1/1. Interconverts simultaneously and stereospecifically pyruvate and lactate with concomitant interconversion of NADH and NAD(+). The protein is L-lactate dehydrogenase A chain (LDHA) of Pongo abelii (Sumatran orangutan).